The following is a 109-amino-acid chain: FK506-binding protein (109 aa).

The PPIase FKBP-type domain maps to 20 to 108 (GKEITVHYTG…IFEVELLKVY (89 aa)).

Belongs to the FKBP-type PPIase family.

It catalyses the reaction [protein]-peptidylproline (omega=180) = [protein]-peptidylproline (omega=0). Its activity is regulated as follows. Inhibited by FK506. Functionally, PPIases accelerate the folding of proteins. In Neisseria meningitidis serogroup B (strain ATCC BAA-335 / MC58), this protein is FK506-binding protein (fbp).